A 655-amino-acid polypeptide reads, in one-letter code: Methylenetetrahydrofolate reductase (NADPH) (655 aa).

The disordered stretch occupies residues methionine 1–glutamate 39. 9 positions are modified to phosphoserine: serine 10, serine 18, serine 19, serine 20, serine 22, serine 24, serine 25, serine 28, and serine 29. Low complexity predominate over residues proline 11–glycine 35. Threonine 33 is subject to Phosphothreonine. The Proton donor/acceptor role is filled by glutamate 62. NAD(+)-binding positions include glutamate 62–arginine 67 and threonine 93–tryptophan 94. Threonine 93 is modified (phosphothreonine). Threonine 93–tryptophan 94 contacts FAD. Serine 102 is subject to Phosphoserine. FAD-binding positions include histidine 126, arginine 156–aspartate 158, tyrosine 173–alanine 174, tyrosine 196, histidine 200–glycine 203, aspartate 209, and lysine 216. Residue aspartate 158 coordinates substrate. Glutamine 227, tyrosine 320, and arginine 324 together coordinate substrate. Phosphoserine is present on serine 393. Threonine 450 bears the Phosphothreonine mark. Residues asparagine 455, alanine 460–threonine 463, threonine 480–glutamine 484, threonine 559, and threonine 572 each bind S-adenosyl-L-methionine.

This sequence belongs to the methylenetetrahydrofolate reductase family. As to quaternary structure, homodimer. The cofactor is FAD. In terms of processing, phosphorylation of an N-terminal serine-rich phosphorylation region increases sensitivity to S-adenosylmethionine and inhibition.

It carries out the reaction (6S)-5-methyl-5,6,7,8-tetrahydrofolate + NADP(+) = (6R)-5,10-methylene-5,6,7,8-tetrahydrofolate + NADPH + H(+). Its pathway is one-carbon metabolism; tetrahydrofolate interconversion. Its activity is regulated as follows. Allosterically regulated by S-adenosylmethionine (SAM). Its function is as follows. Catalyzes the conversion of 5,10-methylenetetrahydrofolate to 5-methyltetrahydrofolate, a cosubstrate for homocysteine remethylation to methionine. Represents a key regulatory connection between the folate and methionine cycles. The polypeptide is Methylenetetrahydrofolate reductase (NADPH) (MTHFR) (Bos taurus (Bovine)).